Consider the following 144-residue polypeptide: Acylphosphatase-like protein MJ1331 (144 aa).

One can recognise an Acylphosphatase-like domain in the interval 8–100; that stretch reads TYELRIYGNV…FPNGLNKIST (93 aa).

The sequence is that of Acylphosphatase-like protein MJ1331 from Methanocaldococcus jannaschii (strain ATCC 43067 / DSM 2661 / JAL-1 / JCM 10045 / NBRC 100440) (Methanococcus jannaschii).